The sequence spans 375 residues: Phosphoribulokinase, chloroplastic (375 aa).

Residues 1-31 constitute a chloroplast transit peptide; it reads MAFTMRAPAPRATAQSRVTANRARRSLVVRA. A disulfide bond links cysteine 47 and cysteine 86.

The protein belongs to the phosphoribulokinase family. Component of a complex that contains two dimers of PRK, two tetramers of GAPDH and CP12.

The protein resides in the plastid. It localises to the chloroplast. It carries out the reaction D-ribulose 5-phosphate + ATP = D-ribulose 1,5-bisphosphate + ADP + H(+). It participates in carbohydrate biosynthesis; Calvin cycle. With respect to regulation, light regulated via thioredoxin by reversible oxidation/reduction of sulfhydryl/disulfide groups. This chain is Phosphoribulokinase, chloroplastic (PRKA), found in Chlamydomonas reinhardtii (Chlamydomonas smithii).